The following is a 330-amino-acid chain: Probable cell division protein WhiA (330 aa).

The H-T-H motif DNA-binding region spans 275-308; sequence SLDELGRLSDPPLTKDAIAGRIRRLLAMADRRAE.

It belongs to the WhiA family.

In terms of biological role, involved in cell division and chromosome segregation. This Kocuria rhizophila (strain ATCC 9341 / DSM 348 / NBRC 103217 / DC2201) protein is Probable cell division protein WhiA.